A 350-amino-acid polypeptide reads, in one-letter code: UDP-N-acetylenolpyruvoylglucosamine reductase (350 aa).

Residues 24–195 form the FAD-binding PCMH-type domain; it reads HVDATARWLL…VAVEFNLPLL (172 aa). R172 is a catalytic residue. Residue S245 is the Proton donor of the active site. E342 is a catalytic residue.

The protein belongs to the MurB family. FAD is required as a cofactor.

The protein resides in the cytoplasm. The enzyme catalyses UDP-N-acetyl-alpha-D-muramate + NADP(+) = UDP-N-acetyl-3-O-(1-carboxyvinyl)-alpha-D-glucosamine + NADPH + H(+). Its pathway is cell wall biogenesis; peptidoglycan biosynthesis. In terms of biological role, cell wall formation. This Xanthomonas campestris pv. campestris (strain 8004) protein is UDP-N-acetylenolpyruvoylglucosamine reductase.